Consider the following 2525-residue polypeptide: Highly reducing polyketide synthase cm3B (2525 aa).

Positions Met1–Leu10 are enriched in polar residues. The interval Met1–Pro29 is disordered. The Ketosynthase family 3 (KS3) domain maps to Pro29 to Ala450. Residues Cys202, His336, and His376 each act as for beta-ketoacyl synthase activity in the active site. Residues Val560 to Val895 are malonyl-CoA:ACP transacylase (MAT) domain. The interval His949 to Ala1087 is N-terminal hotdog fold. The segment at His949–Pro1252 is dehydratase (DH) domain. Residues His949 to Leu1257 enclose the PKS/mFAS DH domain. His981 (proton acceptor; for dehydratase activity) is an active-site residue. Residues Val1107–Leu1257 are C-terminal hotdog fold. Asp1169 acts as the Proton donor; for dehydratase activity in catalysis. The methyltransferase (CMet) domain stretch occupies residues Leu1399–Phe1504. Residues Gly1799 to Leu2111 are enoyl reductase (ER) domain. The 79-residue stretch at Ala2411–Ser2489 folds into the Carrier domain. A ketoreductase (KR) domain region spans residues Ala2411–Ser2489. Ser2449 is modified (O-(pantetheine 4'-phosphoryl)serine).

Its pathway is secondary metabolite biosynthesis. Its function is as follows. Highly reducing polyketide synthase; part of the gene cluster that mediates the biosynthesis of beauveriolides I and III, cyclodepsipeptides acting as inhibitors of the acyl-CoA:cholesterol acyltransferase. The HR-PKS cm3B initiates the biosynthesis of beauveriolides by iteratively catalyzing the formation of the linear polyketide chain. The ATP-dependent acetyl-CoA ligase cm3D converts the polyketide carboxylic acid to a CoA thioester which id shuttled to the first T domain in the NRPS cm3A by the acetyltransferase cm3C. Cm3A contains 13 domains and assembles the polyketide chain, L-phenylalanine, L-alanine, and D-leucine (or D-allo-isoleucine) to form beauveriolide I (or beauveriolide III). The production of both beauveriolides I and III suggests the substrate adaptability of cm3B, using different amino acids as substrates. The sequence is that of Highly reducing polyketide synthase cm3B from Cordyceps militaris (strain CM01) (Caterpillar fungus).